A 620-amino-acid polypeptide reads, in one-letter code: Synchronized import protein 1 (620 aa).

Residues 1 to 32 are disordered; that stretch reads MGRSKKRSRASSSRLNPLRKAGSNDNNKDTNV. ARM repeat units lie at residues 25 to 64, 66 to 106, 181 to 221, 258 to 299, 340 to 386, 435 to 470, 471 to 510, and 564 to 607; these read DNNK…VLCE, AHMR…NLSL, DDIL…TTLD, ANEL…NIDP, IKLQ…NFLP, DSQD…NRAL, INVQ…TYAM, and RGGF…TLDS.

This sequence belongs to the nuclear import and ribosome assembly adapter family. Forms a heterotrimeric complex with RPL5 and RPL11A or RPL11B; interaction of this complex with KAP104 allows the nuclear import of the heterotrimer. Component of a hexameric 5S RNP precursor complex, composed of 5S RNA, RRS1, RPF2, RPL5, RPL11A/RPL11B and SYO1; this complex acts as a precursor for ribosome assembly.

Its subcellular location is the cytoplasm. It localises to the nucleus. Its function is as follows. Nuclear import adapter that specifically recruits the two functionally and topologically linked ribosomal proteins RPL5 and RPL11 (encoded by RPL11A and RPL11B). Guarantees that this cargo pair remains bound together from the time of synthesis in the cytoplasm until delivery to the nascent 5S rRNA in the nucleus. The chain is Synchronized import protein 1 (SYO1) from Saccharomyces cerevisiae (strain ATCC 204508 / S288c) (Baker's yeast).